Here is a 376-residue protein sequence, read N- to C-terminus: Succinyl-diaminopimelate desuccinylase (376 aa).

Position 67 (His67) interacts with Zn(2+). Asp69 is an active-site residue. Asp100 serves as a coordination point for Zn(2+). Residue Glu134 is the Proton acceptor of the active site. Residues Glu135, Glu163, and His349 each contribute to the Zn(2+) site.

This sequence belongs to the peptidase M20A family. DapE subfamily. In terms of assembly, homodimer. Requires Zn(2+) as cofactor. The cofactor is Co(2+).

It carries out the reaction N-succinyl-(2S,6S)-2,6-diaminopimelate + H2O = (2S,6S)-2,6-diaminopimelate + succinate. The protein operates within amino-acid biosynthesis; L-lysine biosynthesis via DAP pathway; LL-2,6-diaminopimelate from (S)-tetrahydrodipicolinate (succinylase route): step 3/3. Its function is as follows. Catalyzes the hydrolysis of N-succinyl-L,L-diaminopimelic acid (SDAP), forming succinate and LL-2,6-diaminopimelate (DAP), an intermediate involved in the bacterial biosynthesis of lysine and meso-diaminopimelic acid, an essential component of bacterial cell walls. The protein is Succinyl-diaminopimelate desuccinylase of Shewanella sediminis (strain HAW-EB3).